The sequence spans 325 residues: RepFIB replication protein A (325 aa).

The segment at 279–298 (APNDESKENPLPPSPAEKVS) is disordered.

This sequence belongs to the initiator RepB protein family.

Its function is as follows. This protein is essential for plasmid replication; it is involved in copy control functions. In vitro, binds to the DNA repeat units, BCDD'D'', EFG and HIJ. This Escherichia coli protein is RepFIB replication protein A (repA).